Here is a 259-residue protein sequence, read N- to C-terminus: Protein N-terminal and lysine N-methyltransferase efm7 (259 aa).

S-adenosyl-L-methionine contacts are provided by residues Trp-56, 83–85 (GAA), Asp-105, Trp-139, and Ala-163.

It belongs to the class I-like SAM-binding methyltransferase superfamily. EFM7 family.

The protein resides in the cytoplasm. S-adenosyl-L-methionine-dependent protein methyltransferase that trimethylates the N-terminal glycine 'Gly-2' of elongation factor 1-alpha, before also catalyzing the mono- and dimethylation of 'Lys-3'. The polypeptide is Protein N-terminal and lysine N-methyltransferase efm7 (Aspergillus fumigatus (strain ATCC MYA-4609 / CBS 101355 / FGSC A1100 / Af293) (Neosartorya fumigata)).